Consider the following 339-residue polypeptide: Probable N5-carboxyaminoimidazole ribonucleotide mutase (339 aa).

Substrate contacts are provided by S11, D14, and R41.

Belongs to the AIR carboxylase family. Class I subfamily.

It catalyses the reaction 5-carboxyamino-1-(5-phospho-D-ribosyl)imidazole + H(+) = 5-amino-1-(5-phospho-D-ribosyl)imidazole-4-carboxylate. It participates in purine metabolism; IMP biosynthesis via de novo pathway; 5-amino-1-(5-phospho-D-ribosyl)imidazole-4-carboxylate from 5-amino-1-(5-phospho-D-ribosyl)imidazole (N5-CAIR route): step 2/2. Its function is as follows. Catalyzes the conversion of N5-carboxyaminoimidazole ribonucleotide (N5-CAIR) to 4-carboxy-5-aminoimidazole ribonucleotide (CAIR). This Methanobrevibacter smithii protein is Probable N5-carboxyaminoimidazole ribonucleotide mutase.